Here is a 352-residue protein sequence, read N- to C-terminus: Protein Wnt-3a (352 aa).

Positions 1-18 (MASFGYFLFLCGLSQALS) are cleaved as a signal peptide. Cysteine 77 and cysteine 88 are disulfide-bonded. N-linked (GlcNAc...) asparagine glycosylation is found at asparagine 87 and asparagine 92. 10 disulfide bridges follow: cysteine 128–cysteine 136, cysteine 138–cysteine 155, cysteine 203–cysteine 217, cysteine 205–cysteine 212, cysteine 281–cysteine 312, cysteine 297–cysteine 307, cysteine 311–cysteine 351, cysteine 327–cysteine 342, cysteine 329–cysteine 339, and cysteine 334–cysteine 335. Serine 209 is lipidated: O-palmitoleoyl serine; by PORCN. The N-linked (GlcNAc...) asparagine glycan is linked to asparagine 298.

It belongs to the Wnt family. In terms of processing, palmitoleoylation is required for efficient binding to frizzled receptors. Depalmitoleoylation leads to inhibit the Wnt signaling pathway. Disulfide bonds have critical and distinct roles in secretion and activity. Loss of each conserved cysteine in WNT3A results in high molecular weight oxidized Wnt oligomers, which are formed through inter-Wnt disulfide bonding. In terms of tissue distribution, expressed in cornea. Isoform 1 is expressed in the primitive streak, dorsal neural tube, proximal otic vesicle, the apical ectodermal ridge and the epithelium of feather buds.

The protein resides in the secreted. The protein localises to the extracellular space. It is found in the extracellular matrix. Its subcellular location is the cytoplasm. Functionally, ligand for members of the frizzled family of seven transmembrane receptors. Functions in the canonical Wnt signaling pathway that results in activation of transcription factors of the TCF/LEF family. Regulates chick apical ectodermal ridge formation. Required for normal embryonic mesoderm development and formation of caudal somites. Required for normal morphogenesis of the developing neural tube. The sequence is that of Protein Wnt-3a (WNT3A) from Gallus gallus (Chicken).